Reading from the N-terminus, the 488-residue chain is Glutamyl-tRNA(Gln) amidotransferase subunit A, mitochondrial (488 aa).

Residues Lys62 and Ser140 each act as charge relay system in the active site. Ser164 acts as the Acyl-ester intermediate in catalysis. A disordered region spans residues 205–228; the sequence is GHDDNDPTSITPQTRERIQDRLSR. The segment covering 218–227 has biased composition (basic and acidic residues); that stretch reads TRERIQDRLS.

Belongs to the amidase family. GatA subfamily. As to quaternary structure, subunit of the heterotrimeric GatCAB amidotransferase (AdT) complex, composed of A, B and C subunits.

The protein resides in the mitochondrion. It carries out the reaction L-glutamyl-tRNA(Gln) + L-glutamine + ATP + H2O = L-glutaminyl-tRNA(Gln) + L-glutamate + ADP + phosphate + H(+). Its function is as follows. Allows the formation of correctly charged Gln-tRNA(Gln) through the transamidation of misacylated Glu-tRNA(Gln) in the mitochondria. The reaction takes place in the presence of glutamine and ATP through an activated gamma-phospho-Glu-tRNA(Gln). This Tuber melanosporum (strain Mel28) (Perigord black truffle) protein is Glutamyl-tRNA(Gln) amidotransferase subunit A, mitochondrial.